The primary structure comprises 965 residues: Calsyntenin-2 (965 aa).

The first 20 residues, 1 to 20, serve as a signal peptide directing secretion; the sequence is MLPGRLCLVPLLLALGVGSG. Residues 21–835 are Extracellular-facing; the sequence is GGSGDGGDSR…SIQRSSVVPS (815 aa). Cadherin domains follow at residues 46–162 and 163–282; these read IETS…APTF and KEPA…MPLF. 2 N-linked (GlcNAc...) asparagine glycosylation sites follow: Asn-58 and Asn-100. N-linked (GlcNAc...) asparagine glycans are attached at residues Asn-344, Asn-376, Asn-720, and Asn-733. The helical transmembrane segment at 836 to 856 threads the bilayer; sequence IATVVIIISVCMLVFVVAMGV. Topologically, residues 857–965 are cytoplasmic; sequence YRVRIAHQHF…NTAGVINIWK (109 aa). The tract at residues 891–965 is disordered; it reads PMEKHEGPGH…NTAGVINIWK (75 aa). Residues 892 to 902 are compositionally biased toward basic and acidic residues; it reads MEKHEGPGHGE. The segment covering 903-915 has biased composition (acidic residues); it reads DETEGEEEEEAEE. The span at 942 to 959 shows a compositional bias: polar residues; it reads QSGTSSQRPERSTWNTAG.

The protein belongs to the calsyntenin family. Proteolytically processed under normal cellular conditions. A primary zeta-cleavage generates a large extracellular (soluble) N-terminal domain (sAlc) and a short C-terminal transmembrane fragment (CTF1). A secondary cleavage catalyzed by gamma-secretase within the transmembrane domain releases the beta-Alc-gamma chain in the extracellular milieu and produces an intracellular fragment (AlcICD). This processing is strongly suppressed in the tripartite complex formed with APBA2 and APP, which seems to prevent the association with PSEN1.

It is found in the postsynaptic cell membrane. Its subcellular location is the endoplasmic reticulum membrane. The protein resides in the golgi apparatus membrane. It localises to the cell projection. The protein localises to the dendrite. In terms of biological role, postsynaptic adhesion molecule that binds to presynaptic neurexins to mediate synapse formation, and which is involved in learning and memory. Promotes synapse development by acting as a cell adhesion molecule at the postsynaptic membrane, which associates with neurexin-alpha at the presynaptic membrane. This Rattus norvegicus (Rat) protein is Calsyntenin-2.